The following is a 261-amino-acid chain: Hydroxyethylthiazole kinase (261 aa).

M40 contacts substrate. ATP-binding residues include K116 and T162. G189 lines the substrate pocket.

This sequence belongs to the Thz kinase family. It depends on Mg(2+) as a cofactor.

It carries out the reaction 5-(2-hydroxyethyl)-4-methylthiazole + ATP = 4-methyl-5-(2-phosphooxyethyl)-thiazole + ADP + H(+). It functions in the pathway cofactor biosynthesis; thiamine diphosphate biosynthesis; 4-methyl-5-(2-phosphoethyl)-thiazole from 5-(2-hydroxyethyl)-4-methylthiazole: step 1/1. Functionally, catalyzes the phosphorylation of the hydroxyl group of 4-methyl-5-beta-hydroxyethylthiazole (THZ). The chain is Hydroxyethylthiazole kinase from Methanosarcina mazei (strain ATCC BAA-159 / DSM 3647 / Goe1 / Go1 / JCM 11833 / OCM 88) (Methanosarcina frisia).